We begin with the raw amino-acid sequence, 122 residues long: Large ribosomal subunit protein eL18 (122 aa).

The protein belongs to the eukaryotic ribosomal protein eL18 family.

The chain is Large ribosomal subunit protein eL18 from Picrophilus torridus (strain ATCC 700027 / DSM 9790 / JCM 10055 / NBRC 100828 / KAW 2/3).